A 166-amino-acid polypeptide reads, in one-letter code: Cofilin-1 (166 aa).

N-acetylalanine is present on A2. S3 is subject to Phosphoserine; by NRK. Positions 4 to 153 constitute an ADF-H domain; it reads GVAVSDGVIK…KDRCTLAEKL (150 aa). S8 bears the Phosphoserine mark. An N6-acetyllysine modification is found at K13. T25 is subject to Phosphothreonine. The short motif at 30–34 is the Nuclear localization signal element; it reads KKRKK. Residue S41 is modified to Phosphoserine. The residue at position 63 (T63) is a Phosphothreonine. Phosphotyrosine is present on Y68. K73 bears the N6-acetyllysine mark. Y82 carries the post-translational modification Phosphotyrosine. S108 bears the Phosphoserine mark. K132 participates in a covalent cross-link: Glycyl lysine isopeptide (Lys-Gly) (interchain with G-Cter in SUMO2). Y140 bears the Phosphotyrosine mark. N6-acetyllysine is present on K144. S156 bears the Phosphoserine mark.

It belongs to the actin-binding proteins ADF family. In terms of assembly, can bind G- and F-actin in a 1:1 ratio of cofilin to actin. It is a major component of intranuclear and cytoplasmic actin rods. Interacts with the subcortical maternal complex (SCMC) via interaction with TLE6 isoform 1 and NLRP5. Interacts with C9orf72. (Microbial infection) Interacts with human respiratory syncytial virus (HRSV) matrix protein; this interaction probably facilitates viral replication. Post-translationally, inactivated by phosphorylation on Ser-3. Phosphorylated on Ser-3 in resting cells. Dephosphorylated by PDXP/chronophin; this restores its activity in promoting actin filament depolymerization. The phosphorylation of Ser-24 may prevent recognition of the nuclear localization signal. Phosphorylated via a ARRB1-RAC1-LIMK1-PAK1 cascade upon active ligand stimulation of atypical chemokine receptor ACKR2. Widely distributed in various tissues.

The protein localises to the nucleus matrix. The protein resides in the cytoplasm. It is found in the cytoskeleton. It localises to the cell projection. Its subcellular location is the ruffle membrane. The protein localises to the lamellipodium membrane. The protein resides in the lamellipodium. It is found in the growth cone. It localises to the axon. In terms of biological role, binds to F-actin and exhibits pH-sensitive F-actin depolymerizing activity. In conjunction with the subcortical maternal complex (SCMC), plays an essential role for zygotes to progress beyond the first embryonic cell divisions via regulation of actin dynamics. Required for the centralization of the mitotic spindle and symmetric division of zygotes. Plays a role in the regulation of cell morphology and cytoskeletal organization in epithelial cells. Required for the up-regulation of atypical chemokine receptor ACKR2 from endosomal compartment to cell membrane, increasing its efficiency in chemokine uptake and degradation. Required for neural tube morphogenesis and neural crest cell migration. The sequence is that of Cofilin-1 (CFL1) from Homo sapiens (Human).